Consider the following 132-residue polypeptide: SLSHGKYYALGSGPARAMATKVKDGAVEPVEELYKELEYRDSHDKTVLVIENDAVPPVEIVEKVAAACGVSPADLTIIVTPTSSLAGGVQVVGRVLEVAMHKAHALHFPLENIVDGTGSAPVCPPHPNFVKA.

The protein belongs to the MCH family.

The protein resides in the cytoplasm. The catalysed reaction is 5,10-methenyl-5,6,7,8-tetrahydromethanopterin + H2O = N(5)-formyl-5,6,7,8-tetrahydromethanopterin + H(+). Its pathway is one-carbon metabolism; formaldehyde degradation; formate from formaldehyde (H(4)MPT route): step 3/5. Catalyzes the hydrolysis of methenyl-H(4)MPT(+) to 5-formyl-H(4)MPT. This chain is Methenyltetrahydromethanopterin cyclohydrolase (mch), found in Methylomonas rubra.